The following is a 212-amino-acid chain: Dephospho-CoA kinase (212 aa).

The region spanning 3–207 (IIGLTGGIAS…RHLADDPEPG (205 aa)) is the DPCK domain. Residue 11–16 (ASGKST) participates in ATP binding.

The protein belongs to the CoaE family.

It localises to the cytoplasm. It carries out the reaction 3'-dephospho-CoA + ATP = ADP + CoA + H(+). The protein operates within cofactor biosynthesis; coenzyme A biosynthesis; CoA from (R)-pantothenate: step 5/5. In terms of biological role, catalyzes the phosphorylation of the 3'-hydroxyl group of dephosphocoenzyme A to form coenzyme A. The protein is Dephospho-CoA kinase of Moorella thermoacetica (strain ATCC 39073 / JCM 9320).